Here is a 207-residue protein sequence, read N- to C-terminus: Peptidyl-tRNA hydrolase (207 aa).

TRNA is bound at residue Y17. H22 serves as the catalytic Proton acceptor. F68, N70, and N116 together coordinate tRNA.

The protein belongs to the PTH family. As to quaternary structure, monomer.

Its subcellular location is the cytoplasm. It carries out the reaction an N-acyl-L-alpha-aminoacyl-tRNA + H2O = an N-acyl-L-amino acid + a tRNA + H(+). Functionally, hydrolyzes ribosome-free peptidyl-tRNAs (with 1 or more amino acids incorporated), which drop off the ribosome during protein synthesis, or as a result of ribosome stalling. Its function is as follows. Catalyzes the release of premature peptidyl moieties from peptidyl-tRNA molecules trapped in stalled 50S ribosomal subunits, and thus maintains levels of free tRNAs and 50S ribosomes. The chain is Peptidyl-tRNA hydrolase from Buchnera aphidicola subsp. Baizongia pistaciae (strain Bp).